We begin with the raw amino-acid sequence, 325 residues long: Elongation factor P--(R)-beta-lysine ligase (325 aa).

76-78 contacts substrate; sequence SPE. ATP-binding positions include 100–102 and Asn-109; that span reads RNE. A substrate-binding site is contributed by Tyr-118. 244-245 is an ATP binding site; the sequence is EL. Residue Glu-251 coordinates substrate. Gly-300 provides a ligand contact to ATP.

It belongs to the class-II aminoacyl-tRNA synthetase family. EpmA subfamily. Homodimer.

The catalysed reaction is D-beta-lysine + L-lysyl-[protein] + ATP = N(6)-((3R)-3,6-diaminohexanoyl)-L-lysyl-[protein] + AMP + diphosphate + H(+). Its function is as follows. With EpmB is involved in the beta-lysylation step of the post-translational modification of translation elongation factor P (EF-P). Catalyzes the ATP-dependent activation of (R)-beta-lysine produced by EpmB, forming a lysyl-adenylate, from which the beta-lysyl moiety is then transferred to the epsilon-amino group of a conserved specific lysine residue in EF-P. The sequence is that of Elongation factor P--(R)-beta-lysine ligase from Yersinia pseudotuberculosis serotype O:1b (strain IP 31758).